A 135-amino-acid chain; its full sequence is Large ribosomal subunit protein eL32 (135 aa).

This sequence belongs to the eukaryotic ribosomal protein eL32 family. Component of the large ribosomal subunit.

Its subcellular location is the cytoplasm. Component of the large ribosomal subunit. The ribosome is a large ribonucleoprotein complex responsible for the synthesis of proteins in the cell. This is Large ribosomal subunit protein eL32 (rpl32) from Ictalurus punctatus (Channel catfish).